The following is a 911-amino-acid chain: Beta-galactosidase 12 (911 aa).

The first 25 residues, 1-25, serve as a signal peptide directing secretion; the sequence is MAARVAAAVAAALLAAALLLPGAAA. Catalysis depends on E192, which acts as the Proton donor. Catalysis depends on E262, which acts as the Nucleophile. N-linked (GlcNAc...) asparagine glycans are attached at residues N263, N389, N473, and N777. One can recognise an SUEL-type lectin domain in the interval 744–831; the sequence is EDTSTRGTLN…ATLAVQLLLA (88 aa).

This sequence belongs to the glycosyl hydrolase 35 family.

The protein resides in the secreted. It localises to the extracellular space. Its subcellular location is the apoplast. The catalysed reaction is Hydrolysis of terminal non-reducing beta-D-galactose residues in beta-D-galactosides.. This chain is Beta-galactosidase 12, found in Oryza sativa subsp. japonica (Rice).